Reading from the N-terminus, the 306-residue chain is Ribonuclease Z (306 aa).

Zn(2+)-binding residues include H63, H65, D67, H68, H141, D211, and H269. The Proton acceptor role is filled by D67.

This sequence belongs to the RNase Z family. In terms of assembly, homodimer. Requires Zn(2+) as cofactor.

The enzyme catalyses Endonucleolytic cleavage of RNA, removing extra 3' nucleotides from tRNA precursor, generating 3' termini of tRNAs. A 3'-hydroxy group is left at the tRNA terminus and a 5'-phosphoryl group is left at the trailer molecule.. Functionally, zinc phosphodiesterase, which displays some tRNA 3'-processing endonuclease activity. Probably involved in tRNA maturation, by removing a 3'-trailer from precursor tRNA. This is Ribonuclease Z from Staphylococcus aureus (strain MSSA476).